The following is a 273-amino-acid chain: Urease accessory protein UreD (273 aa).

The protein belongs to the UreD family. As to quaternary structure, ureD, UreF and UreG form a complex that acts as a GTP-hydrolysis-dependent molecular chaperone, activating the urease apoprotein by helping to assemble the nickel containing metallocenter of UreC. The UreE protein probably delivers the nickel.

The protein localises to the cytoplasm. In terms of biological role, required for maturation of urease via the functional incorporation of the urease nickel metallocenter. This chain is Urease accessory protein UreD, found in Rhizobium rhizogenes (strain K84 / ATCC BAA-868) (Agrobacterium radiobacter).